The sequence spans 661 residues: UvrABC system protein B (661 aa).

Positions 28-414 (DGVNERKRHQ…HTDEMVEQII (387 aa)) constitute a Helicase ATP-binding domain. Residue 41 to 48 (GATGTGKT) coordinates ATP. A Beta-hairpin motif is present at residues 94-117 (YYDYYQPEAYVPSTDTFIEKDASI). A Helicase C-terminal domain is found at 432 to 598 (QIDDLLSEIQ…TINKKIHDVI (167 aa)). The disordered stretch occupies residues 603–624 (ESDETNQQQQTELPKKMTKKER). Positions 625 to 660 (QKTIENIEKEMKKAAKDLDFEKATELRDMLFELKAE) constitute a UVR domain.

This sequence belongs to the UvrB family. As to quaternary structure, forms a heterotetramer with UvrA during the search for lesions. Interacts with UvrC in an incision complex.

It localises to the cytoplasm. Functionally, the UvrABC repair system catalyzes the recognition and processing of DNA lesions. A damage recognition complex composed of 2 UvrA and 2 UvrB subunits scans DNA for abnormalities. Upon binding of the UvrA(2)B(2) complex to a putative damaged site, the DNA wraps around one UvrB monomer. DNA wrap is dependent on ATP binding by UvrB and probably causes local melting of the DNA helix, facilitating insertion of UvrB beta-hairpin between the DNA strands. Then UvrB probes one DNA strand for the presence of a lesion. If a lesion is found the UvrA subunits dissociate and the UvrB-DNA preincision complex is formed. This complex is subsequently bound by UvrC and the second UvrB is released. If no lesion is found, the DNA wraps around the other UvrB subunit that will check the other stand for damage. The protein is UvrABC system protein B of Staphylococcus epidermidis (strain ATCC 12228 / FDA PCI 1200).